A 503-amino-acid polypeptide reads, in one-letter code: Anhydrotetracycline monooxygenase (503 aa).

It belongs to the PheA/TfdB FAD monooxygenase family. It depends on FAD as a cofactor.

It catalyses the reaction anhydrotetracycline + NADPH + O2 + H(+) = 5a,11a-dehydrotetracycline + NADP(+) + H2O. The protein operates within antibiotic biosynthesis; oxytetracycline biosynthesis. Functionally, catalyzes hydroxylation of the anthracycline structure at position C-6 during the biosynthesis of oxytetracyline. This Streptomyces rimosus protein is Anhydrotetracycline monooxygenase.